A 254-amino-acid chain; its full sequence is Ribonuclease HII (254 aa).

The region spanning 67 to 254 (IVIAGVDEVG…HRMSFLKNII (188 aa)) is the RNase H type-2 domain. 3 residues coordinate a divalent metal cation: D73, E74, and D170.

This sequence belongs to the RNase HII family. It depends on Mn(2+) as a cofactor. Mg(2+) serves as cofactor.

The protein resides in the cytoplasm. The catalysed reaction is Endonucleolytic cleavage to 5'-phosphomonoester.. Functionally, endonuclease that specifically degrades the RNA of RNA-DNA hybrids. In Clostridium acetobutylicum (strain ATCC 824 / DSM 792 / JCM 1419 / IAM 19013 / LMG 5710 / NBRC 13948 / NRRL B-527 / VKM B-1787 / 2291 / W), this protein is Ribonuclease HII.